The sequence spans 195 residues: MQAIKCVVVGDGAVGKTCLLLSYTTNAFPGEYILTVFDTYSTNVMVDGRPINLSLWDTAGQDDYDQFRHLSFPQTDVFLVCFALNNPASFENVRAKWYPEVSHHCPNTPIILVGTKADLREDRDTIERLRERRLQPVSHTQGYVMAKEIKAVKYLECSALTQIGLKQVFDEAIRTGLTPPQTPQTRAKKSNCTVL.

10 to 17 is a binding site for GTP; sequence GDGAVGKT. The short motif at 32–40 is the Effector region element; sequence YILTVFDTY. GTP contacts are provided by residues 57–61 and 115–118; these read DTAGQ and TKAD. A disordered region spans residues 176-195; it reads GLTPPQTPQTRAKKSNCTVL. Cysteine methyl ester is present on C192. The S-geranylgeranyl cysteine moiety is linked to residue C192. Residues 193 to 195 constitute a propeptide, removed in mature form; it reads TVL.

Belongs to the small GTPase superfamily. Rho family.

It localises to the cell membrane. Functionally, during gonad morphogenesis, plays a role in distal tip cell (DTC)-mediated guidance of gonad elongation. The polypeptide is Ras-related protein rac-2 (rac-2) (Caenorhabditis elegans).